The sequence spans 545 residues: CTP synthase (545 aa).

The interval 1–266 (MTHFIFVTGG…DDLICERFGF (266 aa)) is amidoligase domain. S13 lines the CTP pocket. Residue S13 coordinates UTP. ATP-binding positions include 14–19 (SLGKGI) and D71. 2 residues coordinate Mg(2+): D71 and E140. Residues 147-149 (DIE), 187-192 (KTKPTQ), and K223 contribute to the CTP site. Residues 187–192 (KTKPTQ) and K223 contribute to the UTP site. 239 to 241 (KDA) is an ATP binding site. The region spanning 292–543 (RVAMVGKYVE…IDAAKTQHQK (252 aa)) is the Glutamine amidotransferase type-1 domain. L-glutamine is bound at residue G353. Catalysis depends on C380, which acts as the Nucleophile; for glutamine hydrolysis. L-glutamine is bound by residues 381–384 (LGMQ), E404, and R471. Residues H516 and E518 contribute to the active site.

Belongs to the CTP synthase family. In terms of assembly, homotetramer.

It catalyses the reaction UTP + L-glutamine + ATP + H2O = CTP + L-glutamate + ADP + phosphate + 2 H(+). It carries out the reaction L-glutamine + H2O = L-glutamate + NH4(+). The catalysed reaction is UTP + NH4(+) + ATP = CTP + ADP + phosphate + 2 H(+). Its pathway is pyrimidine metabolism; CTP biosynthesis via de novo pathway; CTP from UDP: step 2/2. With respect to regulation, allosterically activated by GTP, when glutamine is the substrate; GTP has no effect on the reaction when ammonia is the substrate. The allosteric effector GTP functions by stabilizing the protein conformation that binds the tetrahedral intermediate(s) formed during glutamine hydrolysis. Inhibited by the product CTP, via allosteric rather than competitive inhibition. Functionally, catalyzes the ATP-dependent amination of UTP to CTP with either L-glutamine or ammonia as the source of nitrogen. Regulates intracellular CTP levels through interactions with the four ribonucleotide triphosphates. The polypeptide is CTP synthase (Acinetobacter baumannii (strain ACICU)).